Here is a 242-residue protein sequence, read N- to C-terminus: Terpene cyclase dpchB (242 aa).

Transmembrane regions (helical) follow at residues valine 16 to valine 36, alanine 51 to phenylalanine 71, tyrosine 78 to valine 95, leucine 114 to valine 134, alanine 141 to cysteine 161, serine 169 to isoleucine 189, and isoleucine 207 to valine 227.

This sequence belongs to the paxB family.

Its subcellular location is the membrane. The protein operates within secondary metabolite biosynthesis; terpenoid biosynthesis. Functionally, terpene cyclase; part of the gene cluster that mediates the biosynthesis of the diterpenoid pyrones higginsianins A and B. The first step of the pathway is the synthesis of the alpha-pyrone moiety by the polyketide synthase dpchA via condensation of one acetyl-CoA starter unit with 3 malonyl-CoA units and 2 methylations. The alpha-pyrone is then combined with geranylgeranyl pyrophosphate (GGPP) formed by the GGPP synthase dpchD through the action of the prenyltransferase dpchC to yield a linear alpha-pyrone diterpenoid. Subsequent steps in the diterpenoid pyrone biosynthetic pathway involve the decalin core formation, which is initiated by the epoxidation of the C10-C11 olefin by the FAD-dependent oxidoreductase dpchE, and is followed by a cyclization cascade catalyzed by the terpene cyclase dpchB. The short chain dehydrogenase/reductase dpchG then oxidizes the 8S hydroxy group to a ketone and the short chain dehydrogenase/reductase dpchH reduces the ketone to the 8R hydroxy group to yield higginsianin B. Finally, the FAD-dependent oxidoreductase dpchF converts higginsianin B into higginsianin A. In Colletotrichum higginsianum (strain IMI 349063) (Crucifer anthracnose fungus), this protein is Terpene cyclase dpchB.